Consider the following 159-residue polypeptide: Ribosomal RNA large subunit methyltransferase H (159 aa).

S-adenosyl-L-methionine is bound by residues Leu76, Gly108, and 127–132 (FSKMTF).

It belongs to the RNA methyltransferase RlmH family. In terms of assembly, homodimer.

The protein resides in the cytoplasm. The catalysed reaction is pseudouridine(1915) in 23S rRNA + S-adenosyl-L-methionine = N(3)-methylpseudouridine(1915) in 23S rRNA + S-adenosyl-L-homocysteine + H(+). Its function is as follows. Specifically methylates the pseudouridine at position 1915 (m3Psi1915) in 23S rRNA. In Staphylococcus haemolyticus (strain JCSC1435), this protein is Ribosomal RNA large subunit methyltransferase H.